Consider the following 936-residue polypeptide: Protocadherin gamma-A10 (936 aa).

The signal sequence occupies residues 1–32; that stretch reads MAAQRNRSKESKDCSGLVLLCLFFGIPWEAGA. Cadherin domains are found at residues 33–137, 138–246, 247–351, 352–456, 457–566, and 574–687; these read RQIS…APKF, QAEN…APVF, TLPE…SPEL, TITS…PPTF, SQVS…APEI, and DGST…SPAN. The Extracellular segment spans residues 33–696; that stretch reads RQISYSIPEE…NSETSDLTLY (664 aa). N51 carries an N-linked (GlcNAc...) asparagine glycan. N-linked (GlcNAc...) asparagine glycosylation is found at N423 and N549. Residues 697–717 form a helical membrane-spanning segment; the sequence is LVVAVAAVSCVFLAFVIVLLA. Topologically, residues 718–936 are cytoplasmic; the sequence is HRLRRWHKSR…KKKSGKKEKK (219 aa). 2 disordered regions span residues 806–845 and 906–936; these read EDTP…WPNN and ATLT…KEKK. Over residues 820 to 845 the composition is skewed to polar residues; it reads WRFSQAQRPGTSGSQNGDDTGTWPNN. The segment covering 926 to 936 has biased composition (basic residues); it reads NKKKSGKKEKK.

It localises to the cell membrane. Its function is as follows. Potential calcium-dependent cell-adhesion protein. May be involved in the establishment and maintenance of specific neuronal connections in the brain. The polypeptide is Protocadherin gamma-A10 (PCDHGA10) (Homo sapiens (Human)).